The primary structure comprises 358 residues: 3-dehydroquinate synthase (358 aa).

NAD(+) contacts are provided by residues 70 to 75, 104 to 108, 128 to 129, Lys141, Lys150, and 168 to 171; these read DGEQFK, GVIGD, TT, and CLHT. The Zn(2+) site is built by Glu183, His246, and His263.

It belongs to the sugar phosphate cyclases superfamily. Dehydroquinate synthase family. The cofactor is Co(2+). Zn(2+) serves as cofactor. Requires NAD(+) as cofactor.

Its subcellular location is the cytoplasm. The catalysed reaction is 7-phospho-2-dehydro-3-deoxy-D-arabino-heptonate = 3-dehydroquinate + phosphate. It functions in the pathway metabolic intermediate biosynthesis; chorismate biosynthesis; chorismate from D-erythrose 4-phosphate and phosphoenolpyruvate: step 2/7. In terms of biological role, catalyzes the conversion of 3-deoxy-D-arabino-heptulosonate 7-phosphate (DAHP) to dehydroquinate (DHQ). This Shewanella baltica (strain OS155 / ATCC BAA-1091) protein is 3-dehydroquinate synthase.